The following is a 798-amino-acid chain: Metabotropic glutamate receptor-like protein A (798 aa).

Positions 1–23 (MNKLKFLIILFITFLFNLKYINS) are cleaved as a signal peptide. Residues 24–388 (LKQCKISVLL…DYSNSMKLGL (365 aa)) lie on the Extracellular side of the membrane. N-linked (GlcNAc...) asparagine glycosylation is found at asparagine 186, asparagine 275, and asparagine 320. Residues 389 to 409 (TIVSGFCILFCIISMVLVIMF) traverse the membrane as a helical segment. The Cytoplasmic segment spans residues 410 to 419 (RHAKIIKSAS). A helical transmembrane segment spans residues 420–440 (PIFCLLILFGCIIIFSGCIIF). The Extracellular segment spans residues 441-447 (SLSPTDG). A helical transmembrane segment spans residues 448 to 468 (ICGARVWLLSIGYTIFLGSLL). Residues 469 to 494 (VKNWRIWLLFDNPKLKKRSITNWKLY) are Cytoplasmic-facing. A helical transmembrane segment spans residues 495-515 (PFVAGILAADVLILALWQGLG). Over 516 to 545 (DIRSESRIGIDSLTKYQYANVCSSNDQGSV) the chain is Extracellular. The chain crosses the membrane as a helical span at residues 546–566 (ALYILLVFHGIKLLAACFISF). Topologically, residues 567 to 580 (KIKAVDIEEFNESK) are cytoplasmic. A helical transmembrane segment spans residues 581–601 (PIASSIYIITFCLFIVIPLMV). Topologically, residues 602 to 609 (SPQSVASQ) are extracellular. Residues 610–630 (VITIVVCAIVTTLISISLLFG) traverse the membrane as a helical segment. Residues 631 to 798 (SKFYMMATQG…NQSEIDPDDV (168 aa)) lie on the Cytoplasmic side of the membrane. Residues 714-771 (AEQDSKLDLENQNDENEIENNQNNQNNIVEDCQKVEKLEKDENLEKDENLEKDENLEK) are a coiled coil. A compositionally biased stretch (basic and acidic residues) spans 752–774 (EKDENLEKDENLEKDENLEKDNE). Residues 752–798 (EKDENLEKDENLEKDENLEKDNENQSIIQKKRLSKNFNQSEIDPDDV) are disordered.

The protein in the N-terminal section; belongs to the BMP lipoprotein family. This sequence in the C-terminal section; belongs to the G-protein coupled receptor 3 family. GABA-B receptor subfamily.

It localises to the membrane. The protein localises to the cytoplasm. Its subcellular location is the cell cortex. It is found in the perinuclear region. May play an important role in the terminal differentiation. This is Metabotropic glutamate receptor-like protein A (grlA) from Dictyostelium discoideum (Social amoeba).